We begin with the raw amino-acid sequence, 127 residues long: Large ribosomal subunit protein bL17 (127 aa).

This sequence belongs to the bacterial ribosomal protein bL17 family. In terms of assembly, part of the 50S ribosomal subunit. Contacts protein L32.

This Xanthomonas oryzae pv. oryzae (strain KACC10331 / KXO85) protein is Large ribosomal subunit protein bL17.